The following is a 124-amino-acid chain: Small ribosomal subunit protein uS12 (124 aa).

Residues M1 to P28 form a disordered region. D89 carries the post-translational modification 3-methylthioaspartic acid. Positions T101–E124 are disordered. The segment covering G113–E124 has biased composition (basic residues).

This sequence belongs to the universal ribosomal protein uS12 family. Part of the 30S ribosomal subunit. Contacts proteins S8 and S17. May interact with IF1 in the 30S initiation complex.

With S4 and S5 plays an important role in translational accuracy. In terms of biological role, interacts with and stabilizes bases of the 16S rRNA that are involved in tRNA selection in the A site and with the mRNA backbone. Located at the interface of the 30S and 50S subunits, it traverses the body of the 30S subunit contacting proteins on the other side and probably holding the rRNA structure together. The combined cluster of proteins S8, S12 and S17 appears to hold together the shoulder and platform of the 30S subunit. This chain is Small ribosomal subunit protein uS12, found in Crocosphaera subtropica (strain ATCC 51142 / BH68) (Cyanothece sp. (strain ATCC 51142)).